Reading from the N-terminus, the 384-residue chain is Queuine tRNA-ribosyltransferase (384 aa).

Asp92 (proton acceptor) is an active-site residue. Residues 92-96, Asp146, Gln190, and Gly217 contribute to the substrate site; that span reads DSGGF. The segment at 248–254 is RNA binding; sequence GVGRPED. Residue Asp267 is the Nucleophile of the active site. Residues 272 to 276 are RNA binding; important for wobble base 34 recognition; that stretch reads TRHAR. 4 residues coordinate Zn(2+): Cys305, Cys307, Cys310, and His337.

The protein belongs to the queuine tRNA-ribosyltransferase family. In terms of assembly, homodimer. Within each dimer, one monomer is responsible for RNA recognition and catalysis, while the other monomer binds to the replacement base PreQ1. The cofactor is Zn(2+).

It carries out the reaction 7-aminomethyl-7-carbaguanine + guanosine(34) in tRNA = 7-aminomethyl-7-carbaguanosine(34) in tRNA + guanine. It participates in tRNA modification; tRNA-queuosine biosynthesis. Its function is as follows. Catalyzes the base-exchange of a guanine (G) residue with the queuine precursor 7-aminomethyl-7-deazaguanine (PreQ1) at position 34 (anticodon wobble position) in tRNAs with GU(N) anticodons (tRNA-Asp, -Asn, -His and -Tyr). Catalysis occurs through a double-displacement mechanism. The nucleophile active site attacks the C1' of nucleotide 34 to detach the guanine base from the RNA, forming a covalent enzyme-RNA intermediate. The proton acceptor active site deprotonates the incoming PreQ1, allowing a nucleophilic attack on the C1' of the ribose to form the product. After dissociation, two additional enzymatic reactions on the tRNA convert PreQ1 to queuine (Q), resulting in the hypermodified nucleoside queuosine (7-(((4,5-cis-dihydroxy-2-cyclopenten-1-yl)amino)methyl)-7-deazaguanosine). The polypeptide is Queuine tRNA-ribosyltransferase (Xylella fastidiosa (strain M12)).